The sequence spans 320 residues: Malate dehydrogenase (320 aa).

NAD(+)-binding positions include Gly-10–Gly-15 and Asp-34. The substrate site is built by Arg-83 and Arg-89. Residues Asn-96 and Ile-119–Asn-121 contribute to the NAD(+) site. Residues Asn-121 and Arg-152 each contribute to the substrate site. Catalysis depends on His-176, which acts as the Proton acceptor.

Belongs to the LDH/MDH superfamily. MDH type 3 family.

The catalysed reaction is (S)-malate + NAD(+) = oxaloacetate + NADH + H(+). Functionally, catalyzes the reversible oxidation of malate to oxaloacetate. The polypeptide is Malate dehydrogenase (Rhizobium meliloti (strain 1021) (Ensifer meliloti)).